The primary structure comprises 710 residues: MEEMEEELKCPVCGSFYREPIILPCSHNICQACARNILVQTPESESPQSRRASGSGVSDYDYLDLDKMSLYSEADSGYGSYGGFASAPTTPCQKSPNGVRVFPPAMPPPATHLSPALASVPRNSCITCPQCHRSLILDDRGLRGFPKNRVLEGVIDRYQQSKAAALKCQLCEKAPKEATVMCEQCDVFYCDPCRLRCHPPRGPLAKHRLVPPAQGRVSRRLSPRKVSTCTDHELENHSMYCVQCKMPVCYQCLEEGKHSSHEVKALGAMWKLHKSQLSQALNGLSDRAKEAKEFLVQLRNMVQQIQENSVEFEACLVAQCDALIDALNRRKAQLLARVNKEHEHKLKVVRDQISHCTVKLRQTTGLMEYCLEVIKENDPSGFLQISDALIRRVHLTEDQWGKGTLTPRMTTDFDLSLDNSPLLQSIHQLDFVQMKASSPVPATPILQLEDCCTHNNSATLSWKQPPLSTVPAEGYILELDDGNGGQFREVYVGKETMCTVDGLHFNSTYNARIKAFNKTGVSQYSKTLVLQTSEVAWFAFDPGSAHSDIIFSNDNLTVTCSSYDDRVVLGKTGFSKGVHYWELTVDRYDNHPDPAFGVARIDVMKDVMLGKDDKAWAMYVDNNRSWFMHNNSHTNRTEGGITKGATIGVLLDFNRKTLTFFINDEQQGPIAFENVEGLFFPAVSLNRNVQVTLHTGLQVPDFYSSRASIA.

An RING-type zinc finger spans residues Cys-10–Arg-50. Thr-41 is modified (phosphothreonine). Phosphoserine is present on residues Ser-44, Ser-46, Ser-49, and Ser-53. B box-type zinc fingers lie at residues Ala-163–Pro-212 and Arg-224–Leu-266. Zn(2+)-binding residues include Cys-168, Cys-171, Cys-193, His-198, Cys-229, His-232, Cys-252, and His-258. A coiled-coil region spans residues His-273–Lys-340. The COS domain maps to Ile-374–Val-432. The Fibronectin type-III domain occupies Val-440 to Val-535. The 170-residue stretch at Ser-533–Phe-702 folds into the B30.2/SPRY domain.

Belongs to the TRIM/RBCC family. Interacts with SNAP25. Post-translationally, auto-ubiquitinated.

The protein localises to the cytoplasm. Its subcellular location is the cell projection. It is found in the dendrite. It localises to the cytoplasmic vesicle. The protein resides in the secretory vesicle. The protein localises to the synaptic vesicle. Its subcellular location is the synapse. It is found in the cytoskeleton. It catalyses the reaction S-ubiquitinyl-[E2 ubiquitin-conjugating enzyme]-L-cysteine + [acceptor protein]-L-lysine = [E2 ubiquitin-conjugating enzyme]-L-cysteine + N(6)-ubiquitinyl-[acceptor protein]-L-lysine.. It functions in the pathway protein modification; protein ubiquitination. Functionally, E3 ubiquitin-protein ligase which ubiquitinates itself in cooperation with an E2 enzyme UBE2D2/UBC4 and serves as a targeting signal for proteasomal degradation. May play a role in regulation of neuronal functions. May act as a regulator of synaptic vesicle exocytosis by controlling the availability of SNAP25 for the SNARE complex formation. The protein is E3 ubiquitin-protein ligase TRIM9 (TRIM9) of Bos taurus (Bovine).